The primary structure comprises 249 residues: tRNA uridine(34) hydroxylase (249 aa).

One can recognise a Rhodanese domain in the interval 124–218 (TKQDVIVIDT…YLEDTQNKNN (95 aa)). Residue Cys178 is the Cysteine persulfide intermediate of the active site.

The protein belongs to the TrhO family.

The catalysed reaction is uridine(34) in tRNA + AH2 + O2 = 5-hydroxyuridine(34) in tRNA + A + H2O. Its function is as follows. Catalyzes oxygen-dependent 5-hydroxyuridine (ho5U) modification at position 34 in tRNAs. This chain is tRNA uridine(34) hydroxylase, found in Rickettsia canadensis (strain McKiel).